The following is a 757-amino-acid chain: Transmembrane channel-like protein 1 (757 aa).

The segment at 1–74 is disordered; it reads MLQIQVEEKE…RRRLRRGAEE (74 aa). The Cytoplasmic segment spans residues 1-176; that stretch reads MLQIQVEEKE…KIKAIESQFG (176 aa). The span at 8-23 shows a compositional bias: acidic residues; sequence EKEEDTEESSSEEEED. A Phosphoserine modification is found at serine 30. Threonine 38 bears the Phosphothreonine mark. The span at 43–54 shows a compositional bias: acidic residues; the sequence is NEDDPEPEPEDE. Positions 81 to 130 are required for interaction with CIB2; that stretch reads EELERLKALLDENRQMIATVKCKPWKMEKKIEVLKEAKKFVSENEGALGK. A Phosphoserine modification is found at serine 122. The chain crosses the membrane as a helical span at residues 177–214; sequence SSVASYFLFLRWMYGVNMVLFVLTFSLIMLPEYLWGLP. Topologically, residues 215–265 are extracellular; it reads YGSLPRKTVPRAEEASAANFGVLYDFNGLAQYSVLFYGYYDNKRTIGWLNF. The chain crosses the membrane as a helical span at residues 266-297; the sequence is RLPLSYFLVGIMCIGYSFLVVLKAMTKNIGDD. A required for interaction with CIB2 region spans residues 298–352; the sequence is GGGDDNTFNFSWKVFCSWDYLIGNPETADNKFNSITMNFKEAIIEERAAQVEENI. Residues 298–353 are Cytoplasmic-facing; it reads GGGDDNTFNFSWKVFCSWDYLIGNPETADNKFNSITMNFKEAIIEERAAQVEENIH. Serine 308 carries the phosphoserine modification. Residues 354 to 384 form a helical membrane-spanning segment; that stretch reads LIRFLRFLANFFVFLTLGASGYLIFWAVKRS. At 385 to 396 the chain is on the extracellular side; it reads QEFAQQDPDTLG. Threonine 394 bears the Phosphothreonine mark. The helical transmembrane segment at 397–424 threads the bilayer; sequence WWEKNEMNMVMSLLGMFCPTLFDLFAEL. Topologically, residues 425–428 are cytoplasmic; it reads EDYH. The chain crosses the membrane as a helical span at residues 429–463; that stretch reads PLIALKWLLGRIFALLLGNLYVFILALMDEINNKI. The Extracellular portion of the chain corresponds to 464 to 512; sequence EEEKLVKANITLWEANMIKAYNESLSGLSGNTTGAPFFVHPADVPRGPC. The chain crosses the membrane as a helical span at residues 513–550; the sequence is WETMVGQEFVRLTVSDVLTTYVTILIGDFLRACFVRFC. Residues 551 to 569 lie on the Cytoplasmic side of the membrane; the sequence is NYCWCWDLEYGYPSYTEFD. Residues 570–590 traverse the membrane as a helical segment; the sequence is ISGNVLALIFNQGMIWMGSFF. Residues 591-593 are Extracellular-facing; it reads APS. Residues 594-616 form a helical membrane-spanning segment; it reads LPGINILRLHTSMYFQCWAVMCC. The Cytoplasmic portion of the chain corresponds to 617-630; that stretch reads NVPEARVFKASRSN. The helical transmembrane segment at 631–654 threads the bilayer; the sequence is NFYLGMLLLILFLSTMPVLYMIVS. Over 655–697 the chain is Extracellular; sequence LPPSFDCGPFSGKNRMFEVIGETLEHDFPSWMAKILRQLSNPG. The chain crosses the membrane as a helical span at residues 698-731; the sequence is LVIAVILVMVLTIYYLNATAKGQKAANLDLKKKM. At 732–757 the chain is on the cytoplasmic side; it reads KQQALENKMRNKKMAAARAAAAAGGQ.

Belongs to the TMC family. In terms of assembly, forms the MET channel composed of TMC dimer (TMC1 or TMC2), TMIE, TOMT, CIB (CIB2 or CIB3), LHFPL5 and PCDH15. Interacts with PIEZO1 and PIEZO2; the interaction may be part of the MET complex. The interaction of TMC1 and TMC2 with TOMT is required for the transportation of TMC1/2 into the stereocilia of hair cells. Interacts (via N-terminus) with both isoforms CD1 and CD3 of PCDH15. Can form a heterodimer with TMC2, TMC5 or TMC7. As to expression, detected in cochlear inner and outer hair cells and in neurosensory epithelia of the vestibular end organs. Also expressed in cortex, cerebellum, eye, colon, ovary and testis.

It is found in the cell membrane. It catalyses the reaction Ca(2+)(in) = Ca(2+)(out). Pore-forming subunit of the mechanotransducer (MET) non-selective cation channel complex located at the tips of stereocilia of cochlear hair cells and that mediates sensory transduction in the auditory system. The MET complex is composed of two dimeric pore-forming ion-conducting transmembrane TMC (TMC1 or TMC2) subunits, several auxiliary proteins including LHFPL5, TMIE, CIB2/3 and TOMT, the tip-link PCDH15, and possibly the PIEZO subunits. MET channel is activated by tension in the tip-link extending from the side wall of one stereocilium to the tip of the adjacent shorter stereocilium, where the channel is located. TMC1 MET channel is highly permeable to calcium and likely transports monovalent cations. Also involved in vestibular hair cells transduction current. This chain is Transmembrane channel-like protein 1, found in Mus musculus (Mouse).